Consider the following 442-residue polypeptide: Putative nucleotide-sugar transporter YMD8 (442 aa).

The Cytoplasmic segment spans residues 1–3; sequence MNR. Residues 4-24 traverse the membrane as a helical segment; sequence TVFLAFVFGWYFCSIALSIYN. Residues 25 to 32 are Extracellular-facing; it reads RWMFDPKD. A helical membrane pass occupies residues 33-53; the sequence is GLGIGYPVLVTTFHQATLWLL. The Cytoplasmic portion of the chain corresponds to 54 to 76; sequence SGIYIKLRHKPVKNVLRKNNGFN. Residues 77 to 97 form a helical membrane-spanning segment; that stretch reads WSFFLKFLLPTAVASAGDIGL. Topologically, residues 98-107 are extracellular; that stretch reads SNVSFQYVPL. Asparagine 99 carries N-linked (GlcNAc...) asparagine glycosylation. Residues 108–128 form a helical membrane-spanning segment; sequence TIYTIIKSSSIAFVLLFGCIF. Residues 129-132 lie on the Cytoplasmic side of the membrane; it reads KLEK. The helical transmembrane segment at 133–153 threads the bilayer; it reads FHWKLALSVIIMFVGVALMVF. The Extracellular portion of the chain corresponds to 154-166; the sequence is KPSDSTSTKNDQA. A helical membrane pass occupies residues 167–187; the sequence is LVIFGSFLVLASSCLSGLRWV. The Cytoplasmic segment spans residues 188 to 254; sequence YTQLMLRNNP…PIHTIHQLAP (67 aa). Residue serine 209 is modified to Phosphoserine. A helical membrane pass occupies residues 255 to 275; the sequence is IMGITLLLTSLLVEKPFPGIF. Residues 276 to 301 lie on the Extracellular side of the membrane; that stretch reads SSSIFRLDTSNGGVGTETTVLSIVRG. Residues 302–322 form a helical membrane-spanning segment; sequence IVLLILPGFAVFLLTICEFSI. Residues 323 to 329 lie on the Cytoplasmic side of the membrane; sequence LEQTPVL. A helical transmembrane segment spans residues 330–350; sequence TVSIVGIVKELLTVIFGIIIL. Over 351-355 the chain is Extracellular; that stretch reads SERLS. A helical membrane pass occupies residues 356–376; sequence GFYNWLGMLIIMADVCYYNYF. The Cytoplasmic segment spans residues 377–442; sequence RYKQDLLQKY…QNVSRSSQQV (66 aa).

The protein belongs to the TPT transporter family. SLC35C subfamily.

The protein resides in the golgi apparatus membrane. It localises to the cytoplasmic vesicle. The protein localises to the COPI-coated vesicle membrane. This chain is Putative nucleotide-sugar transporter YMD8 (YMD8), found in Saccharomyces cerevisiae (strain ATCC 204508 / S288c) (Baker's yeast).